The following is a 103-amino-acid chain: Large ribosomal subunit protein bL21 (103 aa).

Belongs to the bacterial ribosomal protein bL21 family. Part of the 50S ribosomal subunit. Contacts protein L20.

Its function is as follows. This protein binds to 23S rRNA in the presence of protein L20. The polypeptide is Large ribosomal subunit protein bL21 (Haemophilus influenzae (strain ATCC 51907 / DSM 11121 / KW20 / Rd)).